A 341-amino-acid polypeptide reads, in one-letter code: GTPase Obg (341 aa).

In terms of domain architecture, Obg spans Met-1–Ile-159. The OBG-type G domain occupies Ala-160–Asp-327. GTP contacts are provided by residues Gly-166–Ser-173, Phe-191–His-195, Asp-212–Gly-215, Ser-279–Asp-282, and Ser-308–Val-310. Mg(2+) contacts are provided by Ser-173 and Thr-193.

Belongs to the TRAFAC class OBG-HflX-like GTPase superfamily. OBG GTPase family. As to quaternary structure, monomer. It depends on Mg(2+) as a cofactor.

Its subcellular location is the cytoplasm. In terms of biological role, an essential GTPase which binds GTP, GDP and possibly (p)ppGpp with moderate affinity, with high nucleotide exchange rates and a fairly low GTP hydrolysis rate. Plays a role in control of the cell cycle, stress response, ribosome biogenesis and in those bacteria that undergo differentiation, in morphogenesis control. The chain is GTPase Obg from Brucella abortus biovar 1 (strain 9-941).